We begin with the raw amino-acid sequence, 173 residues long: ATP synthase subunit delta (173 aa).

Belongs to the ATPase delta chain family. F-type ATPases have 2 components, F(1) - the catalytic core - and F(0) - the membrane proton channel. F(1) has five subunits: alpha(3), beta(3), gamma(1), delta(1), epsilon(1). F(0) has three main subunits: a(1), b(2) and c(10-14). The alpha and beta chains form an alternating ring which encloses part of the gamma chain. F(1) is attached to F(0) by a central stalk formed by the gamma and epsilon chains, while a peripheral stalk is formed by the delta and b chains.

It localises to the cell inner membrane. In terms of biological role, f(1)F(0) ATP synthase produces ATP from ADP in the presence of a proton or sodium gradient. F-type ATPases consist of two structural domains, F(1) containing the extramembraneous catalytic core and F(0) containing the membrane proton channel, linked together by a central stalk and a peripheral stalk. During catalysis, ATP synthesis in the catalytic domain of F(1) is coupled via a rotary mechanism of the central stalk subunits to proton translocation. This protein is part of the stalk that links CF(0) to CF(1). It either transmits conformational changes from CF(0) to CF(1) or is implicated in proton conduction. The sequence is that of ATP synthase subunit delta from Campylobacter jejuni subsp. jejuni serotype O:6 (strain 81116 / NCTC 11828).